The chain runs to 736 residues: Catalase-peroxidase (736 aa).

A disordered region spans residues 1–25 (MSENGKCPVTGKTSKPVAGGGTSNQ). The tryptophyl-tyrosyl-methioninium (Trp-Tyr) (with M-250) cross-link spans 96-224 (WHSAGTYRMG…LAAVQMGLIY (129 aa)). His-97 serves as the catalytic Proton acceptor. A cross-link (tryptophyl-tyrosyl-methioninium (Tyr-Met) (with W-96)) is located at residues 224–250 (YVNPEGPDGNPDPIASGKDVRETFARM). Residue His-265 participates in heme b binding. The interval 294-313 (GWKSSHGRGKGGDTISSGIE) is disordered.

The protein belongs to the peroxidase family. Peroxidase/catalase subfamily. In terms of assembly, homodimer or homotetramer. It depends on heme b as a cofactor. Formation of the three residue Trp-Tyr-Met cross-link is important for the catalase, but not the peroxidase activity of the enzyme.

The enzyme catalyses H2O2 + AH2 = A + 2 H2O. It catalyses the reaction 2 H2O2 = O2 + 2 H2O. Functionally, bifunctional enzyme with both catalase and broad-spectrum peroxidase activity. The chain is Catalase-peroxidase from Desulfatibacillum aliphaticivorans.